The primary structure comprises 95 residues: Putative regulatory protein STH1338 (95 aa).

It belongs to the RemA family.

The polypeptide is Putative regulatory protein STH1338 (Symbiobacterium thermophilum (strain DSM 24528 / JCM 14929 / IAM 14863 / T)).